The following is a 322-amino-acid chain: Pre-mRNA-splicing factor NTR2 (322 aa).

The tract at residues M1–Q30 is disordered. S40 carries the post-translational modification Phosphoserine. Residues L113–E137 are disordered. Over residues S115–I132 the composition is skewed to low complexity. 2 positions are modified to phosphoserine: S153 and S197.

In terms of assembly, component of the NTR complex (NTC-related complex), composed of NTR1, NTR2 and PRP43. Interacts with CLF1, NTR1 and PRP43.

The protein resides in the cytoplasm. It localises to the nucleus. Its function is as follows. Involved in pre-mRNA splicing and spliceosome disassembly. Promotes release of excised lariat intron from the spliceosome by acting as a receptor for PRP43. This targeting of PRP43 leads to disassembly of the spliceosome with the separation of the U2, U5, U6 snRNPs and the NTC complex. The protein is Pre-mRNA-splicing factor NTR2 (NTR2) of Saccharomyces cerevisiae (strain ATCC 204508 / S288c) (Baker's yeast).